Reading from the N-terminus, the 233-residue chain is 2,3,4,5-tetrahydropyridine-2,6-dicarboxylate N-acetyltransferase (233 aa).

Belongs to the transferase hexapeptide repeat family. DapH subfamily.

The catalysed reaction is (S)-2,3,4,5-tetrahydrodipicolinate + acetyl-CoA + H2O = L-2-acetamido-6-oxoheptanedioate + CoA. Its pathway is amino-acid biosynthesis; L-lysine biosynthesis via DAP pathway; LL-2,6-diaminopimelate from (S)-tetrahydrodipicolinate (acetylase route): step 1/3. In terms of biological role, catalyzes the transfer of an acetyl group from acetyl-CoA to tetrahydrodipicolinate. The sequence is that of 2,3,4,5-tetrahydropyridine-2,6-dicarboxylate N-acetyltransferase from Thermosipho africanus (strain TCF52B).